The primary structure comprises 241 residues: Protein-L-isoaspartate O-methyltransferase (241 aa).

Residue S69 is part of the active site.

It belongs to the methyltransferase superfamily. L-isoaspartyl/D-aspartyl protein methyltransferase family.

Its subcellular location is the cytoplasm. The catalysed reaction is [protein]-L-isoaspartate + S-adenosyl-L-methionine = [protein]-L-isoaspartate alpha-methyl ester + S-adenosyl-L-homocysteine. Its function is as follows. Catalyzes the methyl esterification of L-isoaspartyl residues in peptides and proteins that result from spontaneous decomposition of normal L-aspartyl and L-asparaginyl residues. It plays a role in the repair and/or degradation of damaged proteins. The polypeptide is Protein-L-isoaspartate O-methyltransferase (Hyperthermus butylicus (strain DSM 5456 / JCM 9403 / PLM1-5)).